A 184-amino-acid polypeptide reads, in one-letter code: Alpha-tubulin N-acetyltransferase (184 aa).

Positions 1 to 174 (MNIPPEKMHN…NNFVIFAEYF (174 aa)) constitute an N-acetyltransferase domain. Acetyl-CoA contacts are provided by residues 108–121 (FYIQ…GLGL) and 144–153 (SYKLQSFLKK).

The protein belongs to the acetyltransferase ATAT1 family.

It catalyses the reaction L-lysyl-[alpha-tubulin] + acetyl-CoA = N(6)-acetyl-L-lysyl-[alpha-tubulin] + CoA + H(+). In terms of biological role, specifically acetylates 'Lys-40' in alpha-tubulin on the lumenal side of microtubules. Promotes microtubule destabilization and accelerates microtubule dynamics; this activity may be independent of acetylation activity. Acetylates alpha-tubulin with a slow enzymatic rate, due to a catalytic site that is not optimized for acetyl transfer. Enters the microtubule through each end and diffuses quickly throughout the lumen of microtubules. Acetylates only long/old microtubules because of its slow acetylation rate since it does not have time to act on dynamically unstable microtubules before the enzyme is released. The polypeptide is Alpha-tubulin N-acetyltransferase (Plasmodium knowlesi (strain H)).